We begin with the raw amino-acid sequence, 219 residues long: Interleukin-12 subunit alpha (219 aa).

An N-terminal signal peptide occupies residues 1-22 (MCPARSLLLVATLVLLDYLSLA). Asparagine 24, asparagine 93, and asparagine 107 each carry an N-linked (GlcNAc...) asparagine glycan. 3 disulfide bridges follow: cysteine 37–cysteine 110, cysteine 64–cysteine 196, and cysteine 85–cysteine 123.

The protein belongs to the IL-6 superfamily. As to quaternary structure, heterodimer with IL12B; disulfide-linked. This heterodimer is known as interleukin IL-12. Heterodimer with EBI3/IL27B; not disulfide-linked. This heterodimer is known as interleukin IL-35. Interacts with NBR1; this interaction promotes IL-12 secretion.

The protein resides in the secreted. In terms of biological role, heterodimerizes with IL12B to form the IL-12 cytokine or with EBI3/IL27B to form the IL-35 cytokine. IL-12 is primarily produced by professional antigen-presenting cells (APCs) such as B-cells and dendritic cells (DCs) as well as macrophages and granulocytes and regulates T-cell and natural killer-cell responses, induces the production of interferon-gamma (IFN-gamma), favors the differentiation of T-helper 1 (Th1) cells and is an important link between innate resistance and adaptive immunity. Mechanistically, exerts its biological effects through a receptor composed of IL12R1 and IL12R2 subunits. Binding to the receptor results in the rapid tyrosine phosphorylation of a number of cellular substrates including the JAK family kinases TYK2 and JAK2. In turn, recruited STAT4 gets phosphorylated and translocates to the nucleus where it regulates cytokine/growth factor responsive genes. As part of IL-35, plays essential roles in maintaining the immune homeostasis of the liver microenvironment and also functions as an immune-suppressive cytokine. Mediates biological events through unconventional receptors composed of IL12RB2 and gp130/IL6ST heterodimers or homodimers. Signaling requires the transcription factors STAT1 and STAT4, which form a unique heterodimer that binds to distinct DNA sites. The polypeptide is Interleukin-12 subunit alpha (IL12A) (Macaca mulatta (Rhesus macaque)).